The following is a 518-amino-acid chain: WEB family protein At2g40480 (518 aa).

Coiled-coil stretches lie at residues 95-141 (DIKR…LQQE) and 188-219 (DNLV…AKLT). Residues 303-337 (NGESQDDDSEFCFPEPPRSPVTPRGLRIDNDFSTD) are disordered. Residues 328 to 337 (LRIDNDFSTD) show a composition bias toward basic and acidic residues. Residues 344–375 (ILKKLEEATEGVKQSKQALEAALNRVEIANVK) adopt a coiled-coil conformation.

Belongs to the WEB family.

The chain is WEB family protein At2g40480 from Arabidopsis thaliana (Mouse-ear cress).